Reading from the N-terminus, the 660-residue chain is Oligopeptide-binding protein AliA (660 aa).

A signal peptide spans Met1–Ala22. Cys23 is lipidated: N-palmitoyl cysteine. Cys23 carries the S-diacylglycerol cysteine lipid modification. The segment at Glu638 to Lys660 is disordered.

The protein belongs to the bacterial solute-binding protein 5 family.

The protein resides in the cell membrane. In terms of biological role, part of the binding-protein-dependent transport system for oligopeptides; probably an oligopeptide binding protein. The sequence is that of Oligopeptide-binding protein AliA (aliA) from Streptococcus pneumoniae serotype 4 (strain ATCC BAA-334 / TIGR4).